Reading from the N-terminus, the 206-residue chain is Large ribosomal subunit protein uL4 (206 aa).

Residues 42 to 94 form a disordered region; it reads RRQQGSHKAQGRGDVSRTGSKMYKQKGTGRARHHSARAPQFRGGGQAHGPVVR. A compositionally biased stretch (basic residues) spans 64–77; sequence YKQKGTGRARHHSA.

The protein belongs to the universal ribosomal protein uL4 family. Part of the 50S ribosomal subunit.

Its function is as follows. One of the primary rRNA binding proteins, this protein initially binds near the 5'-end of the 23S rRNA. It is important during the early stages of 50S assembly. It makes multiple contacts with different domains of the 23S rRNA in the assembled 50S subunit and ribosome. In terms of biological role, forms part of the polypeptide exit tunnel. The polypeptide is Large ribosomal subunit protein uL4 (Brucella abortus biovar 1 (strain 9-941)).